The sequence spans 412 residues: DNA replication and repair protein RecF (412 aa).

30–37 contacts ATP; sequence GANGAGKT. The interval 369–412 is disordered; that stretch reads LQVRPGGGTAAVTPDPEYARGEATAANGAASAPTGADAASTSRD. Residues 389–412 are compositionally biased toward low complexity; it reads GEATAANGAASAPTGADAASTSRD.

This sequence belongs to the RecF family.

The protein localises to the cytoplasm. Its function is as follows. The RecF protein is involved in DNA metabolism; it is required for DNA replication and normal SOS inducibility. RecF binds preferentially to single-stranded, linear DNA. It also seems to bind ATP. This chain is DNA replication and repair protein RecF, found in Salinibacter ruber (strain DSM 13855 / M31).